We begin with the raw amino-acid sequence, 176 residues long: NAD(P)H-quinone oxidoreductase subunit 6, chloroplastic (176 aa).

5 helical membrane passes run 10–30, 32–52, 61–81, 92–112, and 152–172; these read ILLV…VLFT, PIFS…FHIL, AQLL…VMFM, LWTV…FSLI, and FYLP…GAIA.

This sequence belongs to the complex I subunit 6 family. NDH is composed of at least 16 different subunits, 5 of which are encoded in the nucleus.

The protein resides in the plastid. It localises to the chloroplast thylakoid membrane. The enzyme catalyses a plastoquinone + NADH + (n+1) H(+)(in) = a plastoquinol + NAD(+) + n H(+)(out). The catalysed reaction is a plastoquinone + NADPH + (n+1) H(+)(in) = a plastoquinol + NADP(+) + n H(+)(out). Its function is as follows. NDH shuttles electrons from NAD(P)H:plastoquinone, via FMN and iron-sulfur (Fe-S) centers, to quinones in the photosynthetic chain and possibly in a chloroplast respiratory chain. The immediate electron acceptor for the enzyme in this species is believed to be plastoquinone. Couples the redox reaction to proton translocation, and thus conserves the redox energy in a proton gradient. This is NAD(P)H-quinone oxidoreductase subunit 6, chloroplastic (ndhG) from Drimys granadensis.